A 345-amino-acid polypeptide reads, in one-letter code: Fructose-1,6-bisphosphatase class 1 2 (345 aa).

Mg(2+) contacts are provided by Glu-90, Asp-109, Leu-111, and Asp-112. Substrate-binding positions include 112–115 (DGSS) and Asn-200. Glu-272 contributes to the Mg(2+) binding site.

The protein belongs to the FBPase class 1 family. Homotetramer. Mg(2+) is required as a cofactor.

It is found in the cytoplasm. It carries out the reaction beta-D-fructose 1,6-bisphosphate + H2O = beta-D-fructose 6-phosphate + phosphate. The protein operates within carbohydrate biosynthesis; gluconeogenesis. The polypeptide is Fructose-1,6-bisphosphatase class 1 2 (Nitrobacter hamburgensis (strain DSM 10229 / NCIMB 13809 / X14)).